We begin with the raw amino-acid sequence, 171 residues long: MSQKNDNFIDKTFTVLADILLKVLPATKEEKKAFSYYRYGMSAQSSGDYAEALENYYEALKLEEDPFDRSYILYNIGLIYGNNGDYSKSLDYYHQALDLNSRLPQALNNIAVIYHYQGTKSSEKKEFEVAQNNFDKAASYWKKAIRLAPNNYIEAQNWLKITGKLSETEIF.

TPR repeat units follow at residues 33-66, 70-103, and 118-151; these read AFSY…EEDP, SYIL…NSRL, and GTKS…APNN.

It belongs to the Ycf3 family.

It localises to the plastid. It is found in the chloroplast thylakoid membrane. Functionally, essential for the assembly of the photosystem I (PSI) complex. May act as a chaperone-like factor to guide the assembly of the PSI subunits. This chain is Photosystem I assembly protein Ycf3, found in Emiliania huxleyi (Coccolithophore).